The primary structure comprises 92 residues: CRISPR-associated endoribonuclease Cas2 2 (92 aa).

D12 provides a ligand contact to Mg(2+).

Belongs to the CRISPR-associated endoribonuclease Cas2 protein family. In terms of assembly, homodimer, forms a heterotetramer with a Cas1 homodimer. Requires Mg(2+) as cofactor.

In terms of biological role, CRISPR (clustered regularly interspaced short palindromic repeat), is an adaptive immune system that provides protection against mobile genetic elements (viruses, transposable elements and conjugative plasmids). CRISPR clusters contain sequences complementary to antecedent mobile elements and target invading nucleic acids. CRISPR clusters are transcribed and processed into CRISPR RNA (crRNA). Functions as a ssRNA-specific endoribonuclease. Involved in the integration of spacer DNA into the CRISPR cassette. This is CRISPR-associated endoribonuclease Cas2 2 (cas22) from Archaeoglobus fulgidus (strain ATCC 49558 / DSM 4304 / JCM 9628 / NBRC 100126 / VC-16).